Consider the following 705-residue polypeptide: Ribosomal RNA large subunit methyltransferase K/L (705 aa).

In terms of domain architecture, THUMP spans 43-154 (LLYQSLLWSR…RDTASVALDL (112 aa)).

It belongs to the methyltransferase superfamily. RlmKL family.

Its subcellular location is the cytoplasm. It catalyses the reaction guanosine(2445) in 23S rRNA + S-adenosyl-L-methionine = N(2)-methylguanosine(2445) in 23S rRNA + S-adenosyl-L-homocysteine + H(+). The enzyme catalyses guanosine(2069) in 23S rRNA + S-adenosyl-L-methionine = N(2)-methylguanosine(2069) in 23S rRNA + S-adenosyl-L-homocysteine + H(+). Specifically methylates the guanine in position 2445 (m2G2445) and the guanine in position 2069 (m7G2069) of 23S rRNA. The polypeptide is Ribosomal RNA large subunit methyltransferase K/L (Pectobacterium atrosepticum (strain SCRI 1043 / ATCC BAA-672) (Erwinia carotovora subsp. atroseptica)).